The following is a 428-amino-acid chain: Serine--tRNA ligase (428 aa).

An L-serine-binding site is contributed by 231-233 (TSE). ATP-binding positions include 262-264 (RRE) and Val278. Glu285 is an L-serine binding site. 349 to 352 (ELTS) is an ATP binding site. L-serine is bound at residue Thr384.

The protein belongs to the class-II aminoacyl-tRNA synthetase family. Type-1 seryl-tRNA synthetase subfamily. In terms of assembly, homodimer. The tRNA molecule binds across the dimer.

The protein resides in the cytoplasm. The catalysed reaction is tRNA(Ser) + L-serine + ATP = L-seryl-tRNA(Ser) + AMP + diphosphate + H(+). The enzyme catalyses tRNA(Sec) + L-serine + ATP = L-seryl-tRNA(Sec) + AMP + diphosphate + H(+). The protein operates within aminoacyl-tRNA biosynthesis; selenocysteinyl-tRNA(Sec) biosynthesis; L-seryl-tRNA(Sec) from L-serine and tRNA(Sec): step 1/1. Catalyzes the attachment of serine to tRNA(Ser). Is also able to aminoacylate tRNA(Sec) with serine, to form the misacylated tRNA L-seryl-tRNA(Sec), which will be further converted into selenocysteinyl-tRNA(Sec). The chain is Serine--tRNA ligase from Bifidobacterium animalis subsp. lactis (strain AD011).